We begin with the raw amino-acid sequence, 340 residues long: Phosphoribosylformylglycinamidine cyclo-ligase (340 aa).

Belongs to the AIR synthase family.

Its subcellular location is the cytoplasm. It carries out the reaction 2-formamido-N(1)-(5-O-phospho-beta-D-ribosyl)acetamidine + ATP = 5-amino-1-(5-phospho-beta-D-ribosyl)imidazole + ADP + phosphate + H(+). The protein operates within purine metabolism; IMP biosynthesis via de novo pathway; 5-amino-1-(5-phospho-D-ribosyl)imidazole from N(2)-formyl-N(1)-(5-phospho-D-ribosyl)glycinamide: step 2/2. In Acetivibrio thermocellus (strain ATCC 27405 / DSM 1237 / JCM 9322 / NBRC 103400 / NCIMB 10682 / NRRL B-4536 / VPI 7372) (Clostridium thermocellum), this protein is Phosphoribosylformylglycinamidine cyclo-ligase.